The chain runs to 228 residues: Leucyl/phenylalanyl-tRNA--protein transferase (228 aa).

Belongs to the L/F-transferase family.

Its subcellular location is the cytoplasm. The enzyme catalyses N-terminal L-lysyl-[protein] + L-leucyl-tRNA(Leu) = N-terminal L-leucyl-L-lysyl-[protein] + tRNA(Leu) + H(+). It carries out the reaction N-terminal L-arginyl-[protein] + L-leucyl-tRNA(Leu) = N-terminal L-leucyl-L-arginyl-[protein] + tRNA(Leu) + H(+). The catalysed reaction is L-phenylalanyl-tRNA(Phe) + an N-terminal L-alpha-aminoacyl-[protein] = an N-terminal L-phenylalanyl-L-alpha-aminoacyl-[protein] + tRNA(Phe). Its function is as follows. Functions in the N-end rule pathway of protein degradation where it conjugates Leu, Phe and, less efficiently, Met from aminoacyl-tRNAs to the N-termini of proteins containing an N-terminal arginine or lysine. In Lawsonia intracellularis (strain PHE/MN1-00), this protein is Leucyl/phenylalanyl-tRNA--protein transferase.